The following is a 286-amino-acid chain: tRNA (guanine-N(7)-)-methyltransferase (286 aa).

S-adenosyl-L-methionine contacts are provided by residues Gly-91, 114 to 115 (EI), 158 to 159 (NS), and Leu-178. Asp-181 is an active-site residue. An S-adenosyl-L-methionine-binding site is contributed by 256 to 258 (TEE).

It belongs to the class I-like SAM-binding methyltransferase superfamily. TrmB family. Forms a complex with TRM82.

It is found in the nucleus. It carries out the reaction guanosine(46) in tRNA + S-adenosyl-L-methionine = N(7)-methylguanosine(46) in tRNA + S-adenosyl-L-homocysteine. Its pathway is tRNA modification; N(7)-methylguanine-tRNA biosynthesis. Catalyzes the formation of N(7)-methylguanine at position 46 (m7G46) in tRNA. This is tRNA (guanine-N(7)-)-methyltransferase from Cryptococcus neoformans var. neoformans serotype D (strain B-3501A) (Filobasidiella neoformans).